Consider the following 198-residue polypeptide: Coagulation factor XIII A chain (198 aa).

The interval 1 to 36 (MSESSGTAFGGRRAIPPNTSNAAENDPPTVELQGLV) is disordered. Ser-2 carries the post-translational modification N-acetylserine. Residues 2-38 (SESSGTAFGGRRAIPPNTSNAAENDPPTVELQGLVPR) constitute a propeptide, activation peptide.

It belongs to the transglutaminase superfamily. Transglutaminase family. As to quaternary structure, tetramer of two A chains (F13A1) and two B (F13B) chains. Ca(2+) serves as cofactor. Post-translationally, the activation peptide is released by thrombin.

The protein localises to the cytoplasm. It is found in the secreted. It catalyses the reaction L-glutaminyl-[protein] + L-lysyl-[protein] = [protein]-L-lysyl-N(6)-5-L-glutamyl-[protein] + NH4(+). In terms of biological role, factor XIII is activated by thrombin and calcium ion to a transglutaminase that catalyzes the formation of gamma-glutamyl-epsilon-lysine cross-links between fibrin chains, thus stabilizing the fibrin clot. Also cross-link alpha-2-plasmin inhibitor, or fibronectin, to the alpha chains of fibrin. The protein is Coagulation factor XIII A chain (F13A1) of Bos taurus (Bovine).